A 230-amino-acid polypeptide reads, in one-letter code: Large ribosomal subunit protein uL1 (230 aa).

The protein belongs to the universal ribosomal protein uL1 family. In terms of assembly, part of the 50S ribosomal subunit.

Functionally, binds directly to 23S rRNA. The L1 stalk is quite mobile in the ribosome, and is involved in E site tRNA release. Protein L1 is also a translational repressor protein, it controls the translation of the L11 operon by binding to its mRNA. The sequence is that of Large ribosomal subunit protein uL1 from Methylobacillus flagellatus (strain ATCC 51484 / DSM 6875 / VKM B-1610 / KT).